The following is a 606-amino-acid chain: DNA primase (606 aa).

The CHC2-type zinc finger occupies 40 to 64 (CPFHQEKTPSFYVVPEKRFYFCHGC). The region spanning 256 to 349 (KAAVLVEGYF…DPDTFARREG (94 aa)) is the Toprim domain. Glu-262, Asp-307, and Asp-309 together coordinate Mg(2+). The disordered stretch occupies residues 429–451 (VPLPKPAGGDAPPSSPNRPAPPL). The segment covering 441–451 (PSSPNRPAPPL) has biased composition (pro residues).

Belongs to the DnaG primase family. Monomer. Interacts with DnaB. Zn(2+) serves as cofactor. It depends on Mg(2+) as a cofactor.

The catalysed reaction is ssDNA + n NTP = ssDNA/pppN(pN)n-1 hybrid + (n-1) diphosphate.. Functionally, RNA polymerase that catalyzes the synthesis of short RNA molecules used as primers for DNA polymerase during DNA replication. This chain is DNA primase, found in Myxococcus xanthus.